Here is a 384-residue protein sequence, read N- to C-terminus: Na(+)/H(+) antiporter NhaA (384 aa).

11 consecutive transmembrane segments (helical) span residues 17-37 (SGLF…SAIA), 53-73 (LEYW…GLEL), 89-109 (MLPI…FLVM), 118-138 (GAGI…SLLG), 147-167 (IFLT…IAVF), 171-191 (TLLW…LILN), 198-218 (LIPY…SGVH), 251-271 (PVAF…VLSS), 283-303 (IGIA…LSML), 321-341 (ILAV…ITLL), and 354-374 (FVIL…LKYV).

Belongs to the NhaA Na(+)/H(+) (TC 2.A.33) antiporter family.

It localises to the cell inner membrane. It catalyses the reaction Na(+)(in) + 2 H(+)(out) = Na(+)(out) + 2 H(+)(in). Na(+)/H(+) antiporter that extrudes sodium in exchange for external protons. The sequence is that of Na(+)/H(+) antiporter NhaA from Flavobacterium psychrophilum (strain ATCC 49511 / DSM 21280 / CIP 103535 / JIP02/86).